Consider the following 217-residue polypeptide: Histone H1C (217 aa).

2 stretches are compositionally biased toward low complexity: residues 1-11 (MAETASTETTP) and 28-45 (KKAAGGAKAKKPSGPSAS). Disordered regions lie at residues 1 to 45 (MAET…PSAS) and 123 to 217 (VAKK…AAKK). In terms of domain architecture, H15 spans 40 to 113 (SGPSASELIV…GASGSFKLNK (74 aa)). Composition is skewed to basic residues over residues 123 to 151 (VAKKKLVAPKAKKPVTAKKKPKSPKKPKK) and 159 to 217 (SPKK…AAKK).

Belongs to the histone H1/H5 family.

It localises to the nucleus. It is found in the chromosome. Functionally, histones H1 are necessary for the condensation of nucleosome chains into higher-order structures. This Xenopus laevis (African clawed frog) protein is Histone H1C.